The following is a 239-amino-acid chain: Large ribosomal subunit protein uL2 (239 aa).

2 disordered regions span residues 1–21 and 203–239; these read MGKSLIQQRRGKGSPTFKSPS and PFGGKEHHPGKPTTTSRRAPPGRKVGHIAARRTGRRK. Over residues 222 to 239 the composition is skewed to basic residues; that stretch reads PPGRKVGHIAARRTGRRK.

Belongs to the universal ribosomal protein uL2 family. As to quaternary structure, part of the 50S ribosomal subunit. Forms a bridge to the 30S subunit in the 70S ribosome.

One of the primary rRNA binding proteins. Required for association of the 30S and 50S subunits to form the 70S ribosome, for tRNA binding and peptide bond formation. It has been suggested to have peptidyltransferase activity; this is somewhat controversial. Makes several contacts with the 16S rRNA in the 70S ribosome. The sequence is that of Large ribosomal subunit protein uL2 from Pyrococcus furiosus (strain ATCC 43587 / DSM 3638 / JCM 8422 / Vc1).